The primary structure comprises 253 residues: 5-oxoprolinase subunit A (253 aa).

Belongs to the LamB/PxpA family. Forms a complex composed of PxpA, PxpB and PxpC.

It carries out the reaction 5-oxo-L-proline + ATP + 2 H2O = L-glutamate + ADP + phosphate + H(+). Functionally, catalyzes the cleavage of 5-oxoproline to form L-glutamate coupled to the hydrolysis of ATP to ADP and inorganic phosphate. The protein is 5-oxoprolinase subunit A of Bacillus cereus (strain Q1).